Reading from the N-terminus, the 127-residue chain is Fluoride-specific ion channel FluC (127 aa).

4 consecutive transmembrane segments (helical) span residues 4–24 (FTLL…RYLI), 35–55 (GFPY…GILM), 71–91 (IIGL…MDNV), and 99–119 (FIKA…ACFI). Na(+) is bound by residues glycine 78 and threonine 81.

It belongs to the fluoride channel Fluc/FEX (TC 1.A.43) family.

It is found in the cell inner membrane. The enzyme catalyses fluoride(in) = fluoride(out). Its activity is regulated as follows. Na(+) is not transported, but it plays an essential structural role and its presence is essential for fluoride channel function. Fluoride-specific ion channel. Important for reducing fluoride concentration in the cell, thus reducing its toxicity. This chain is Fluoride-specific ion channel FluC, found in Photobacterium profundum (strain SS9).